The chain runs to 200 residues: NADH-quinone oxidoreductase subunit I (200 aa).

4Fe-4S ferredoxin-type domains lie at 73 to 102 and 112 to 141; these read RLLESGNERCIGCGLCEKICVSNCIRMETT and LNYSINFGRCVYCGLCADVCPELAIVHGGD. Residues cysteine 82, cysteine 85, cysteine 88, cysteine 92, cysteine 121, cysteine 124, cysteine 127, and cysteine 131 each coordinate [4Fe-4S] cluster.

Belongs to the complex I 23 kDa subunit family. NDH-1 is composed of 14 different subunits. Subunits NuoA, H, J, K, L, M, N constitute the membrane sector of the complex. It depends on [4Fe-4S] cluster as a cofactor.

The protein localises to the cell inner membrane. The catalysed reaction is a quinone + NADH + 5 H(+)(in) = a quinol + NAD(+) + 4 H(+)(out). NDH-1 shuttles electrons from NADH, via FMN and iron-sulfur (Fe-S) centers, to quinones in the respiratory chain. The immediate electron acceptor for the enzyme in this species is believed to be ubiquinone. Couples the redox reaction to proton translocation (for every two electrons transferred, four hydrogen ions are translocated across the cytoplasmic membrane), and thus conserves the redox energy in a proton gradient. The sequence is that of NADH-quinone oxidoreductase subunit I from Campylobacter hominis (strain ATCC BAA-381 / DSM 21671 / CCUG 45161 / LMG 19568 / NCTC 13146 / CH001A).